A 300-amino-acid chain; its full sequence is Junctional adhesion molecule A (300 aa).

A signal peptide spans Met1–Gly26. The Extracellular portion of the chain corresponds to Lys27–Gly238. Ig-like V-type domains are found at residues Gly28–Ser122 and Pro134–Asp230. The N-linked (GlcNAc...) asparagine glycan is linked to Asn42. 2 disulfides stabilise this stretch: Cys49–Cys108 and Cys152–Cys212. Asn185 is a glycosylation site (N-linked (GlcNAc...) asparagine). Residues Ile239–Phe259 traverse the membrane as a helical segment. Residues Ala260 to Leu299 lie on the Cytoplasmic side of the membrane. Ser282, Ser285, and Ser288 each carry phosphoserine.

The protein belongs to the immunoglobulin superfamily. As to quaternary structure, interacts with the ninth PDZ domain of MPDZ. Interacts with the first PDZ domain of PARD3. The association between PARD3 and PARD6B probably disrupts this interaction. Interacts with ITGAL (via I-domain). Interacts with CD151.

The protein localises to the cell junction. Its subcellular location is the tight junction. It is found in the cell membrane. Seems to play a role in epithelial tight junction formation. Appears early in primordial forms of cell junctions and recruits PARD3. The association of the PARD6-PARD3 complex may prevent the interaction of PARD3 with JAM1, thereby preventing tight junction assembly. Plays a role in regulating monocyte transmigration involved in integrity of epithelial barrier. Ligand for integrin alpha-L/beta-2 involved in memory T-cell and neutrophil transmigration. Involved in platelet activation. The protein is Junctional adhesion molecule A (F11r) of Mus musculus (Mouse).